The primary structure comprises 219 residues: Thiamine-phosphate synthase (219 aa).

4-amino-2-methyl-5-(diphosphooxymethyl)pyrimidine contacts are provided by residues 44–48 (QFREK) and asparagine 79. Residues aspartate 80 and aspartate 99 each contribute to the Mg(2+) site. Residue serine 117 coordinates 4-amino-2-methyl-5-(diphosphooxymethyl)pyrimidine. 2-[(2R,5Z)-2-carboxy-4-methylthiazol-5(2H)-ylidene]ethyl phosphate is bound at residue 143–145 (TST). Residue lysine 146 participates in 4-amino-2-methyl-5-(diphosphooxymethyl)pyrimidine binding. 2-[(2R,5Z)-2-carboxy-4-methylthiazol-5(2H)-ylidene]ethyl phosphate-binding positions include glycine 175 and 195–196 (IS).

This sequence belongs to the thiamine-phosphate synthase family. Requires Mg(2+) as cofactor.

It catalyses the reaction 2-[(2R,5Z)-2-carboxy-4-methylthiazol-5(2H)-ylidene]ethyl phosphate + 4-amino-2-methyl-5-(diphosphooxymethyl)pyrimidine + 2 H(+) = thiamine phosphate + CO2 + diphosphate. The catalysed reaction is 2-(2-carboxy-4-methylthiazol-5-yl)ethyl phosphate + 4-amino-2-methyl-5-(diphosphooxymethyl)pyrimidine + 2 H(+) = thiamine phosphate + CO2 + diphosphate. The enzyme catalyses 4-methyl-5-(2-phosphooxyethyl)-thiazole + 4-amino-2-methyl-5-(diphosphooxymethyl)pyrimidine + H(+) = thiamine phosphate + diphosphate. Its pathway is cofactor biosynthesis; thiamine diphosphate biosynthesis; thiamine phosphate from 4-amino-2-methyl-5-diphosphomethylpyrimidine and 4-methyl-5-(2-phosphoethyl)-thiazole: step 1/1. Condenses 4-methyl-5-(beta-hydroxyethyl)thiazole monophosphate (THZ-P) and 2-methyl-4-amino-5-hydroxymethyl pyrimidine pyrophosphate (HMP-PP) to form thiamine monophosphate (TMP). This is Thiamine-phosphate synthase from Bacillus cereus (strain AH187).